A 347-amino-acid polypeptide reads, in one-letter code: L-threonine 3-dehydrogenase (347 aa).

Residue Cys-42 participates in Zn(2+) binding. Residues Thr-44 and His-47 each act as charge relay system in the active site. Residues His-67, Glu-68, Cys-97, Cys-100, Cys-103, and Cys-111 each contribute to the Zn(2+) site. Residues Ile-179, Glu-199, Arg-204, Leu-266–Leu-268, and Ile-291–Thr-292 contribute to the NAD(+) site.

This sequence belongs to the zinc-containing alcohol dehydrogenase family. In terms of assembly, homotetramer. Requires Zn(2+) as cofactor.

It localises to the cytoplasm. The catalysed reaction is L-threonine + NAD(+) = (2S)-2-amino-3-oxobutanoate + NADH + H(+). The protein operates within amino-acid degradation; L-threonine degradation via oxydo-reductase pathway; glycine from L-threonine: step 1/2. Its function is as follows. Catalyzes the NAD(+)-dependent oxidation of L-threonine to 2-amino-3-ketobutyrate. The protein is L-threonine 3-dehydrogenase of Caldanaerobacter subterraneus subsp. tengcongensis (strain DSM 15242 / JCM 11007 / NBRC 100824 / MB4) (Thermoanaerobacter tengcongensis).